The following is a 357-amino-acid chain: Arginine kinase (357 aa).

At Ala-2 the chain carries N-acetylalanine. Residues 9–91 (KLDEGFKKLE…FDPIIEDYHK (83 aa)) enclose the Phosphagen kinase N-terminal domain. L-arginine is bound at residue 64–68 (GVGVY). The region spanning 119-356 (FVISTRVRCG…LELIKIEKEM (238 aa)) is the Phosphagen kinase C-terminal domain. Residues 122-126 (STRVR) and His-185 each bind ATP. Glu-225 contributes to the L-arginine binding site. Position 229 (Arg-229) interacts with ATP. An L-arginine-binding site is contributed by Cys-271. ATP-binding positions include 280–284 (RASVH) and 309–314 (RGTRGE). Glu-314 is a binding site for L-arginine.

Belongs to the ATP:guanido phosphotransferase family.

The catalysed reaction is L-arginine + ATP = N(omega)-phospho-L-arginine + ADP + H(+). The chain is Arginine kinase from Eriocheir sinensis (Chinese mitten crab).